A 562-amino-acid chain; its full sequence is NAD-dependent malic enzyme (562 aa).

Catalysis depends on Tyr-101, which acts as the Proton donor. Arg-154 serves as a coordination point for NAD(+). Lys-172 functions as the Proton acceptor in the catalytic mechanism. Glu-243, Asp-244, and Asp-267 together coordinate a divalent metal cation. Residues Asp-267 and Asn-415 each contribute to the NAD(+) site.

The protein belongs to the malic enzymes family. Homotetramer. Requires Mg(2+) as cofactor. The cofactor is Mn(2+).

The catalysed reaction is (S)-malate + NAD(+) = pyruvate + CO2 + NADH. It catalyses the reaction oxaloacetate + H(+) = pyruvate + CO2. This Vibrio campbellii (strain ATCC BAA-1116) protein is NAD-dependent malic enzyme.